The primary structure comprises 179 residues: Repressor of phase 1 flagellin gene (179 aa).

In terms of biological role, transcriptional repressor of the FliC phase-1 flagellin. This chain is Repressor of phase 1 flagellin gene (fljA), found in Salmonella abony.